The chain runs to 147 residues: Peptide methionine sulfoxide reductase MsrB (147 aa).

Residues 1–11 (MPKIVKKEPKF) show a composition bias toward basic and acidic residues. The interval 1 to 25 (MPKIVKKEPKFVEQSGKKVTKSDEQ) is disordered. Positions 23–145 (DEQWREQLSD…NSVSLIFNKS (123 aa)) constitute a MsrB domain. Residues C62, C65, C111, and C114 each contribute to the Zn(2+) site. Catalysis depends on C134, which acts as the Nucleophile.

It belongs to the MsrB Met sulfoxide reductase family. Requires Zn(2+) as cofactor.

It catalyses the reaction L-methionyl-[protein] + [thioredoxin]-disulfide + H2O = L-methionyl-(R)-S-oxide-[protein] + [thioredoxin]-dithiol. In Vibrio parahaemolyticus serotype O3:K6 (strain RIMD 2210633), this protein is Peptide methionine sulfoxide reductase MsrB.